A 413-amino-acid polypeptide reads, in one-letter code: ATP phosphoribosyltransferase regulatory subunit (413 aa).

A disordered region spans residues 1–21 (MRSRAARKFSTTPGTRDVLPP).

This sequence belongs to the class-II aminoacyl-tRNA synthetase family. HisZ subfamily. In terms of assembly, heteromultimer composed of HisG and HisZ subunits.

It is found in the cytoplasm. It participates in amino-acid biosynthesis; L-histidine biosynthesis; L-histidine from 5-phospho-alpha-D-ribose 1-diphosphate: step 1/9. Functionally, required for the first step of histidine biosynthesis. May allow the feedback regulation of ATP phosphoribosyltransferase activity by histidine. The chain is ATP phosphoribosyltransferase regulatory subunit from Rubrobacter xylanophilus (strain DSM 9941 / JCM 11954 / NBRC 16129 / PRD-1).